The primary structure comprises 230 residues: Thymidylate kinase (230 aa).

20 to 27 (GGEGSGKS) serves as a coordination point for ATP.

The protein belongs to the thymidylate kinase family.

It carries out the reaction dTMP + ATP = dTDP + ADP. Phosphorylation of dTMP to form dTDP in both de novo and salvage pathways of dTTP synthesis. This is Thymidylate kinase from Nitrobacter hamburgensis (strain DSM 10229 / NCIMB 13809 / X14).